The sequence spans 135 residues: Transcription antitermination protein NusB (135 aa).

This sequence belongs to the NusB family.

In terms of biological role, involved in transcription antitermination. Required for transcription of ribosomal RNA (rRNA) genes. Binds specifically to the boxA antiterminator sequence of the ribosomal RNA (rrn) operons. This Bdellovibrio bacteriovorus (strain ATCC 15356 / DSM 50701 / NCIMB 9529 / HD100) protein is Transcription antitermination protein NusB.